The sequence spans 273 residues: MALEKIIRESLTGFIQCHIPHADLSALDEVFYAYATGVLEELGSQNSSEEDFEMESFVEMLEAYIPGFSEISSGKVYDMLFELSRRLSEARGKENVSPKPTAEVSFMTPTSSSTESSKKIETEPLEGAVAQEKDDAKNGIDLLLEIFPSCTVSQAQTALSMAKGDLEDAVQIIVDGKVIADNHSGSKDLQGAPKTDDLKDFILQKYMLVDTEDDKKTYRPVAPKEAPKKMIRYIDNQVVSTKGERYKDIKKPESEEMKKTYINLKPARKYKFH.

The segment at 92–121 (GKENVSPKPTAEVSFMTPTSSSTESSKKIE) is disordered. In terms of domain architecture, CUE spans 135–178 (DAKNGIDLLLEIFPSCTVSQAQTALSMAKGDLEDAVQIIVDGKV).

This sequence belongs to the CUEDC2 family. Phosphorylated.

The protein localises to the cytoplasm. Its subcellular location is the nucleus. In terms of biological role, may play a role in targeting proteins for ubiquitination and subsequent proteasomal degradation. This Xenopus laevis (African clawed frog) protein is CUE domain-containing protein 2-A (cuedc2-a).